Consider the following 357-residue polypeptide: Membrane-bound lytic murein transglycosylase C (357 aa).

The signal sequence occupies residues 1–15 (MKKYLLLALLPFLYA). A lipid anchor (N-palmitoyl cysteine) is attached at cysteine 16. The S-diacylglycerol cysteine moiety is linked to residue cysteine 16.

The protein belongs to the transglycosylase Slt family.

It localises to the cell outer membrane. The catalysed reaction is Exolytic cleavage of the (1-&gt;4)-beta-glycosidic linkage between N-acetylmuramic acid (MurNAc) and N-acetylglucosamine (GlcNAc) residues in peptidoglycan, from either the reducing or the non-reducing ends of the peptidoglycan chains, with concomitant formation of a 1,6-anhydrobond in the MurNAc residue.. Murein-degrading enzyme. May play a role in recycling of muropeptides during cell elongation and/or cell division. The polypeptide is Membrane-bound lytic murein transglycosylase C (Haemophilus influenzae (strain PittEE)).